Consider the following 100-residue polypeptide: Replication restart protein PriB (100 aa).

Residues 1 to 99 (MGFNNLVSLA…LRIQNIQEYK (99 aa)) enclose the SSB domain.

This sequence belongs to the PriB family. In terms of assembly, homodimer. Interacts with PriA and DnaT. Component of the replication restart primosome. Primosome assembly occurs via a 'hand-off' mechanism. PriA binds to replication forks, subsequently PriB then DnaT bind; DnaT then displaces ssDNA to generate the helicase loading substrate.

In terms of biological role, involved in the restart of stalled replication forks, which reloads the replicative helicase on sites other than the origin of replication; the PriA-PriB pathway is the major replication restart pathway. During primosome assembly it facilitates complex formation between PriA and DnaT on DNA; stabilizes PriA on DNA. Stimulates the DNA unwinding activity of PriA helicase. In Neisseria meningitidis serogroup B (strain ATCC BAA-335 / MC58), this protein is Replication restart protein PriB.